The sequence spans 307 residues: uncharacterized protein (307 aa).

This is an uncharacterized protein from Acanthamoeba polyphaga mimivirus (APMV).